A 539-amino-acid chain; its full sequence is Putative serine/threonine-protein kinase L670 (539 aa).

The Cyclin N-terminal domain occupies 1–115 (MSLFNNHPEL…ILKVFKFGLH (115 aa)). In terms of domain architecture, Protein kinase spans 258–519 (MNVIEKLGIG…VLKIFSECFV (262 aa)). ATP contacts are provided by residues 264–272 (LGIGSFGLV) and Lys285. The Proton acceptor role is filled by Asp375.

It belongs to the protein kinase superfamily. Ser/Thr protein kinase family.

It carries out the reaction L-seryl-[protein] + ATP = O-phospho-L-seryl-[protein] + ADP + H(+). It catalyses the reaction L-threonyl-[protein] + ATP = O-phospho-L-threonyl-[protein] + ADP + H(+). The sequence is that of Putative serine/threonine-protein kinase L670 from Acanthamoeba polyphaga mimivirus (APMV).